The primary structure comprises 490 residues: ATP synthase subunit beta, chloroplastic (490 aa).

170 to 177 (GGAGVGKT) is an ATP binding site.

It belongs to the ATPase alpha/beta chains family. As to quaternary structure, F-type ATPases have 2 components, CF(1) - the catalytic core - and CF(0) - the membrane proton channel. CF(1) has five subunits: alpha(3), beta(3), gamma(1), delta(1), epsilon(1). CF(0) has four main subunits: a(1), b(1), b'(1) and c(9-12).

Its subcellular location is the plastid. The protein resides in the chloroplast thylakoid membrane. It carries out the reaction ATP + H2O + 4 H(+)(in) = ADP + phosphate + 5 H(+)(out). Produces ATP from ADP in the presence of a proton gradient across the membrane. The catalytic sites are hosted primarily by the beta subunits. The sequence is that of ATP synthase subunit beta, chloroplastic from Convolvulus arvensis (Field bindweed).